Consider the following 689-residue polypeptide: DNA topoisomerase 1 (689 aa).

The 111-residue stretch at 3 to 113 (DNLVIVESPA…KENRVVFNEI (111 aa)) folds into the Toprim domain. 2 residues coordinate Mg(2+): E9 and D82. The Topo IA-type catalytic domain occupies 129–557 (EMNLVDAQQA…FFSSFKQDVE (429 aa)). The segment at 163–168 (SAGRVQ) is interaction with DNA. Y298 acts as the O-(5'-phospho-DNA)-tyrosine intermediate in catalysis. Residues 328–357 (SKRKASGKQGDQDAHEAIRPSSTMRTPDDM) are disordered. 3 C4-type zinc fingers span residues 577 to 603 (CEVC…FPDC), 617 to 645 (CPKC…YPEC), and 658 to 681 (CPKC…CSNC).

This sequence belongs to the type IA topoisomerase family. In terms of assembly, monomer. Requires Mg(2+) as cofactor.

It carries out the reaction ATP-independent breakage of single-stranded DNA, followed by passage and rejoining.. Releases the supercoiling and torsional tension of DNA, which is introduced during the DNA replication and transcription, by transiently cleaving and rejoining one strand of the DNA duplex. Introduces a single-strand break via transesterification at a target site in duplex DNA. The scissile phosphodiester is attacked by the catalytic tyrosine of the enzyme, resulting in the formation of a DNA-(5'-phosphotyrosyl)-enzyme intermediate and the expulsion of a 3'-OH DNA strand. The free DNA strand then undergoes passage around the unbroken strand, thus removing DNA supercoils. Finally, in the religation step, the DNA 3'-OH attacks the covalent intermediate to expel the active-site tyrosine and restore the DNA phosphodiester backbone. This is DNA topoisomerase 1 from Staphylococcus aureus.